Here is a 372-residue protein sequence, read N- to C-terminus: MWQAEVRVDLDAIRENVSWLRSGSAAELMAVVKGDGYGHGMVPAALAALDGGADWLGVCTLDEALTLRREGITAPILAWLLAPGLPLHEGVAAGIDLGAASVAQLDEMVQAGRTAGRPARLHLKIDTGLSRGGATVSDWPGLLTAAAKAQADGTVEVVGVWSHFVYADAPGHPTTDRQLAVFHEGLDMVEKAGLRPRYRHLANSAATLTRPDAHFDLVRPGLAVYGLSPVAGESFGLRPAMTARARVMLTKQVPAGAGVSYGHTYTTERDSTLAVIPLGYADGVPRSASNSGPVHLGGVRRTISGRVCMDQFVLDCGDDPVAPGDVAVLFGSGRNGEPTADDWAEAVGTINYEIVTRFGSTRVPRSYDGERP.

Lysine 33 functions as the Proton acceptor; specific for D-alanine in the catalytic mechanism. Lysine 33 is subject to N6-(pyridoxal phosphate)lysine. Arginine 131 contributes to the substrate binding site. Tyrosine 261 (proton acceptor; specific for L-alanine) is an active-site residue. Methionine 309 contacts substrate.

It belongs to the alanine racemase family. Pyridoxal 5'-phosphate is required as a cofactor.

It catalyses the reaction L-alanine = D-alanine. Its pathway is amino-acid biosynthesis; D-alanine biosynthesis; D-alanine from L-alanine: step 1/1. In terms of biological role, catalyzes the interconversion of L-alanine and D-alanine. May also act on other amino acids. The protein is Alanine racemase (alr) of Salinispora arenicola (strain CNS-205).